The sequence spans 273 residues: MSATGLTRRNTTSQIEAMKGTRPIVSLTAYTTPIARLLDPHCDLLLVGDSLGMVLYGMESTVGVTLEMMIAHGQGVMRGVQKACVIVDMPFGSYQESKEQAFRNAVRILKETGSDGVKLEGGEEMAETVAFLTARGVPVFGHVGLMPQQVKTAGGYRALGRSEEEADKIRRDAKAIEQAGAFALLVEGTVETLAREITASVGIPTIGIGASPACDGQILVSDDMLGLFSDFKPRFVKHFAQLAPTVSKAVEAYAEEVKARTFPGPEHTFQPKK.

Residues Asp-49 and Asp-88 each coordinate Mg(2+). 3-methyl-2-oxobutanoate contacts are provided by residues 49 to 50, Asp-88, and Lys-118; that span reads DS. A Mg(2+)-binding site is contributed by Glu-120. Glu-187 acts as the Proton acceptor in catalysis.

The protein belongs to the PanB family. In terms of assembly, homodecamer; pentamer of dimers. Requires Mg(2+) as cofactor.

It is found in the cytoplasm. The catalysed reaction is 3-methyl-2-oxobutanoate + (6R)-5,10-methylene-5,6,7,8-tetrahydrofolate + H2O = 2-dehydropantoate + (6S)-5,6,7,8-tetrahydrofolate. The protein operates within cofactor biosynthesis; (R)-pantothenate biosynthesis; (R)-pantoate from 3-methyl-2-oxobutanoate: step 1/2. Its function is as follows. Catalyzes the reversible reaction in which hydroxymethyl group from 5,10-methylenetetrahydrofolate is transferred onto alpha-ketoisovalerate to form ketopantoate. This chain is 3-methyl-2-oxobutanoate hydroxymethyltransferase, found in Rhizobium rhizogenes (strain K84 / ATCC BAA-868) (Agrobacterium radiobacter).